We begin with the raw amino-acid sequence, 358 residues long: UDP-N-acetylglucosamine--N-acetylmuramyl-(pentapeptide) pyrophosphoryl-undecaprenol N-acetylglucosamine transferase (358 aa).

UDP-N-acetyl-alpha-D-glucosamine contacts are provided by residues 10-12 (TGG), Asn-124, Arg-165, Ser-187, Ile-243, and Gln-288.

This sequence belongs to the glycosyltransferase 28 family. MurG subfamily.

Its subcellular location is the cell inner membrane. The catalysed reaction is di-trans,octa-cis-undecaprenyl diphospho-N-acetyl-alpha-D-muramoyl-L-alanyl-D-glutamyl-meso-2,6-diaminopimeloyl-D-alanyl-D-alanine + UDP-N-acetyl-alpha-D-glucosamine = di-trans,octa-cis-undecaprenyl diphospho-[N-acetyl-alpha-D-glucosaminyl-(1-&gt;4)]-N-acetyl-alpha-D-muramoyl-L-alanyl-D-glutamyl-meso-2,6-diaminopimeloyl-D-alanyl-D-alanine + UDP + H(+). Its pathway is cell wall biogenesis; peptidoglycan biosynthesis. Its function is as follows. Cell wall formation. Catalyzes the transfer of a GlcNAc subunit on undecaprenyl-pyrophosphoryl-MurNAc-pentapeptide (lipid intermediate I) to form undecaprenyl-pyrophosphoryl-MurNAc-(pentapeptide)GlcNAc (lipid intermediate II). The chain is UDP-N-acetylglucosamine--N-acetylmuramyl-(pentapeptide) pyrophosphoryl-undecaprenol N-acetylglucosamine transferase from Syntrophotalea carbinolica (strain DSM 2380 / NBRC 103641 / GraBd1) (Pelobacter carbinolicus).